The sequence spans 436 residues: RNA polymerase sigma-54 factor (436 aa).

Positions 324–343 form a DNA-binding region, H-T-H motif; that stretch reads TLREVADCLSLHESTVSRAI. Positions 413-421 match the RPON box motif; sequence SRRTVAKYR.

The protein belongs to the sigma-54 factor family. Interacts transiently with the RNAP core.

Functionally, sigma factors are initiation factors that promote the attachment of RNA polymerase (RNAP) to specific initiation sites and are then released. This sigma factor is responsible for the expression of the levanase operon. The open complex (sigma-54 and core RNA polymerase) serves as the receptor for receipt of the melting signal from the remotely bound activator protein LevR for the expression of the levanase operon. Associates with the RNAP core only in stationary phase cells. The protein is RNA polymerase sigma-54 factor (sigL) of Bacillus subtilis (strain 168).